A 134-amino-acid chain; its full sequence is Small ribosomal subunit protein uS11 (134 aa).

Belongs to the universal ribosomal protein uS11 family. As to quaternary structure, part of the 30S ribosomal subunit. Interacts with proteins S7 and S18. Binds to IF-3.

Functionally, located on the platform of the 30S subunit, it bridges several disparate RNA helices of the 16S rRNA. Forms part of the Shine-Dalgarno cleft in the 70S ribosome. This chain is Small ribosomal subunit protein uS11, found in Paraburkholderia xenovorans (strain LB400).